Reading from the N-terminus, the 1100-residue chain is Isoleucine--tRNA ligase (1100 aa).

The short motif at 48–58 is the 'HIGH' region element; the sequence is PFATGLPHFGH. The 'KMSKS' region signature appears at 626–630; it reads KMSKS. Lysine 629 contributes to the ATP binding site.

Belongs to the class-I aminoacyl-tRNA synthetase family. IleS type 2 subfamily. As to quaternary structure, monomer. Zn(2+) serves as cofactor.

The protein localises to the cytoplasm. It carries out the reaction tRNA(Ile) + L-isoleucine + ATP = L-isoleucyl-tRNA(Ile) + AMP + diphosphate. Its function is as follows. Catalyzes the attachment of isoleucine to tRNA(Ile). As IleRS can inadvertently accommodate and process structurally similar amino acids such as valine, to avoid such errors it has two additional distinct tRNA(Ile)-dependent editing activities. One activity is designated as 'pretransfer' editing and involves the hydrolysis of activated Val-AMP. The other activity is designated 'posttransfer' editing and involves deacylation of mischarged Val-tRNA(Ile). The chain is Isoleucine--tRNA ligase from Treponema denticola (strain ATCC 35405 / DSM 14222 / CIP 103919 / JCM 8153 / KCTC 15104).